The chain runs to 85 residues: Large ribosomal subunit protein bL27 (85 aa).

Residues 1–20 (MAHKKGGGTTRNGRDSESKR) form a disordered region.

Belongs to the bacterial ribosomal protein bL27 family.

The chain is Large ribosomal subunit protein bL27 from Herminiimonas arsenicoxydans.